Reading from the N-terminus, the 178-residue chain is Membrane-spanning protein YciB (178 aa).

5 helical membrane-spanning segments follow: residues 22–42, 52–72, 76–96, 121–141, and 151–171; these read IFIASFSLMIASLFTFIITSI, LINLIFVIVFGFLTLFYHNSS, WKVTIIYFLISIVFLINYLFI, LFWSIFFLICAVSNTYIILYF, and IFGLTILTLIAVIINGFYIYF.

This sequence belongs to the YciB family.

It is found in the cell membrane. Functionally, plays a role in cell envelope biogenesis, maintenance of cell envelope integrity and membrane homeostasis. The chain is Membrane-spanning protein YciB from Buchnera aphidicola subsp. Baizongia pistaciae (strain Bp).